Consider the following 328-residue polypeptide: Putative glycosyltransferase 41 (328 aa).

This sequence belongs to the glycosyltransferase group 1 family. Glycosyltransferase 4 subfamily.

The sequence is that of Putative glycosyltransferase 41 (SIFV0041) from Sulfolobus islandicus filamentous virus (isolate Iceland/Hveragerdi) (SIFV).